The following is a 397-amino-acid chain: Acetate kinase (397 aa).

Position 8 (Asn-8) interacts with Mg(2+). Position 15 (Lys-15) interacts with ATP. A substrate-binding site is contributed by Arg-92. Asp-149 acts as the Proton donor/acceptor in catalysis. ATP is bound by residues His-209–Gly-213, Asp-283–Arg-285, and Gly-331–Asn-335. Glu-385 contributes to the Mg(2+) binding site.

It belongs to the acetokinase family. As to quaternary structure, homodimer. Mg(2+) is required as a cofactor. Mn(2+) serves as cofactor.

It is found in the cytoplasm. It carries out the reaction acetate + ATP = acetyl phosphate + ADP. It functions in the pathway metabolic intermediate biosynthesis; acetyl-CoA biosynthesis; acetyl-CoA from acetate: step 1/2. Functionally, catalyzes the formation of acetyl phosphate from acetate and ATP. Can also catalyze the reverse reaction. The polypeptide is Acetate kinase (Corynebacterium glutamicum (strain R)).